Consider the following 174-residue polypeptide: Large ribosomal subunit protein uL6 (174 aa).

Belongs to the universal ribosomal protein uL6 family. As to quaternary structure, part of the 50S ribosomal subunit.

Its function is as follows. This protein binds to the 23S rRNA, and is important in its secondary structure. It is located near the subunit interface in the base of the L7/L12 stalk, and near the tRNA binding site of the peptidyltransferase center. The protein is Large ribosomal subunit protein uL6 of Stenotrophomonas maltophilia (strain R551-3).